A 79-amino-acid chain; its full sequence is MQVLVRDNNVDQALKALKKKMQREGIFREMKLRGHYEKPSEKRAREKAEAIRRARKLARKKMQREGLLPMKPKPVVGVR.

Residues 59-79 (RKKMQREGLLPMKPKPVVGVR) are disordered.

Belongs to the bacterial ribosomal protein bS21 family.

This is Small ribosomal subunit protein bS21 from Methylocella silvestris (strain DSM 15510 / CIP 108128 / LMG 27833 / NCIMB 13906 / BL2).